The primary structure comprises 418 residues: Tyrosine--tRNA ligase (418 aa).

Y34 contributes to the L-tyrosine binding site. A 'HIGH' region motif is present at residues 39–48 (PTADSLHLGH). 2 residues coordinate L-tyrosine: Y169 and Q173. A 'KMSKS' region motif is present at residues 229–233 (KFGKS). K232 is an ATP binding site. The 67-residue stretch at 352–418 (LNIVDMLVTA…GKKKYAVLTY (67 aa)) folds into the S4 RNA-binding domain.

It belongs to the class-I aminoacyl-tRNA synthetase family. TyrS type 1 subfamily. In terms of assembly, homodimer.

The protein localises to the cytoplasm. The catalysed reaction is tRNA(Tyr) + L-tyrosine + ATP = L-tyrosyl-tRNA(Tyr) + AMP + diphosphate + H(+). Catalyzes the attachment of tyrosine to tRNA(Tyr) in a two-step reaction: tyrosine is first activated by ATP to form Tyr-AMP and then transferred to the acceptor end of tRNA(Tyr). This chain is Tyrosine--tRNA ligase, found in Streptococcus equi subsp. equi (strain 4047).